A 725-amino-acid polypeptide reads, in one-letter code: Glyoxysomal fatty acid beta-oxidation multifunctional protein MFP-a (725 aa).

The protein in the N-terminal section; belongs to the enoyl-CoA hydratase/isomerase family. In the central section; belongs to the 3-hydroxyacyl-CoA dehydrogenase family.

It localises to the glyoxysome. It catalyses the reaction a (3S)-3-hydroxyacyl-CoA = a (2E)-enoyl-CoA + H2O. The catalysed reaction is a 4-saturated-(3S)-3-hydroxyacyl-CoA = a (3E)-enoyl-CoA + H2O. It carries out the reaction a (3Z)-enoyl-CoA = a 4-saturated (2E)-enoyl-CoA. The enzyme catalyses a (3E)-enoyl-CoA = a 4-saturated (2E)-enoyl-CoA. It catalyses the reaction (3S)-3-hydroxybutanoyl-CoA = (3R)-3-hydroxybutanoyl-CoA. The catalysed reaction is a (3S)-3-hydroxyacyl-CoA + NAD(+) = a 3-oxoacyl-CoA + NADH + H(+). The protein operates within lipid metabolism; fatty acid beta-oxidation. The polypeptide is Glyoxysomal fatty acid beta-oxidation multifunctional protein MFP-a (Cucumis sativus (Cucumber)).